A 268-amino-acid polypeptide reads, in one-letter code: Hemolysin C (268 aa).

2 consecutive CBS domains span residues 52–111 (MVPR…NFSL) and 114–171 (ILHK…IRDE).

The protein belongs to the UPF0053 family.

Functionally, bacterial hemolysins are exotoxins that attack blood cell membranes and cause cell rupture by mechanisms not clearly defined. The polypeptide is Hemolysin C (tlyC) (Brachyspira hyodysenteriae (Treponema hyodysenteriae)).